The primary structure comprises 593 residues: MNELIKHKLELLPDSPGCYLHKDKNGTIIYVGKAKNLKNRVKSYFHGSHNTKTELLVSEIEDFEYIVTTSNTEALLLEINLIQENMPKYNIRLKDDKSYPYIKITNERYPRLMITRQVKKSDGTYFGPYPDSGAATEIKRLLDRLFPFKKCTNPANKVCFYYHLGQCNAHTVCQTNKAYWDSLREDVKQFLNGKDNKIVNGLTEKMKSAAMTMEFERAAEYRDLIEAISLLRTKQRVIHQDMKDRDVFGYFVDKGWMCVQVFFVRNGKLIQRDVNMFPYYNEPEEDFLTYIGQFYQDTKHFLPKEVFIPQDIDAKSVETIVGCKIVKPQRGEKKQLVNLAIKNARVSLQQKFDLLEKDIRKTHGAIENLGNLLNIPKPVRIEAFDNSNIQGTSPVAAMVVFVNGKPSKKDYRKFKIKTVIGPDDYASMREVIHRRYSRVLKDGLTPPDLIVIDGGQGQVNIARDVIENQLGLAIPIAGLQKNDKHQTHELLFGDPLEVVELPRNSEEFFLLHRIQDEVHRFAITFHRQLRSKNSFSSKLDGITGLGPKRKQLLMKHFKSLPNIQKAEIEDIIMCGIPRTVAESLRDSLNDPPK.

The 78-residue stretch at 14–91 (DSPGCYLHKD…IQENMPKYNI (78 aa)) folds into the GIY-YIG domain. In terms of domain architecture, UVR spans 196–231 (NKIVNGLTEKMKSAAMTMEFERAAEYRDLIEAISLL).

Belongs to the UvrC family. As to quaternary structure, interacts with UvrB in an incision complex.

The protein localises to the cytoplasm. Functionally, the UvrABC repair system catalyzes the recognition and processing of DNA lesions. UvrC both incises the 5' and 3' sides of the lesion. The N-terminal half is responsible for the 3' incision and the C-terminal half is responsible for the 5' incision. This is UvrABC system protein C from Streptococcus agalactiae serotype III (strain NEM316).